A 102-amino-acid polypeptide reads, in one-letter code: Large ribosomal subunit protein bL21 (102 aa).

Belongs to the bacterial ribosomal protein bL21 family. In terms of assembly, part of the 50S ribosomal subunit. Contacts protein L20.

This protein binds to 23S rRNA in the presence of protein L20. This chain is Large ribosomal subunit protein bL21, found in Agathobacter rectalis (strain ATCC 33656 / DSM 3377 / JCM 17463 / KCTC 5835 / VPI 0990) (Eubacterium rectale).